Consider the following 381-residue polypeptide: Ecotin-like protein 3 (381 aa).

The disordered stretch occupies residues 232–381 (EHLEVCPKNN…GSKADPVDGK (150 aa)). The segment covering 273-292 (NESSPSRPRLSSTAYWPQEN) has biased composition (polar residues). A compositionally biased stretch (basic and acidic residues) spans 336–347 (RKAEDDVYEKTM). A compositionally biased stretch (polar residues) spans 363-372 (SASSTKSGNG).

Belongs to the protease inhibitor I11 (ecotin) family.

The protein is Ecotin-like protein 3 of Leishmania major.